The following is a 381-amino-acid chain: Glycerate kinase (381 aa).

It belongs to the glycerate kinase type-1 family.

It catalyses the reaction (R)-glycerate + ATP = (2R)-3-phosphoglycerate + ADP + H(+). The protein is Glycerate kinase (glxK) of Bacillus cereus (strain ATCC 10987 / NRS 248).